We begin with the raw amino-acid sequence, 652 residues long: Maternal embryonic leucine zipper kinase (652 aa).

The Protein kinase domain occupies 13-265 (YELHETIGTG…VKHLLSHPWL (253 aa)). Residues 19–27 (IGTGGFAKV) and K42 contribute to the ATP site. Catalysis depends on D134, which acts as the Proton acceptor. T169 is subject to Phosphothreonine; by autocatalysis. Position 173 is a phosphoserine; by autocatalysis (S173). Positions 284 to 323 (VDEDCVTELSVFYKCSRTSTSRLISEWNYDHITASYLLLH) are UBA-like. An autoinhibitory region region spans residues 328-652 (HGKPVRLKRP…VEDILSSCKV (325 aa)). T415, T450, T452, T482, and T484 each carry phosphothreonine. Positions 443–492 (FLHPAPWTPTPRRKQNEKKGILTTPNKNSHTKEKNQSKETPTKKPITTGE) are disordered. The span at 472–484 (HTKEKNQSKETPT) shows a compositional bias: basic and acidic residues. A phosphoserine mark is found at S499, S506, and S518. Residues 603 to 652 (SDFGKVTMQFELEVCQLSKSEMVGIRRQRLKGDAWVYKRLVEDILSSCKV) enclose the KA1 domain.

This sequence belongs to the protein kinase superfamily. CAMK Ser/Thr protein kinase family. SNF1 subfamily. In terms of processing, autophosphorylated: autophosphorylation of the T-loop at Thr-169 and Ser-173 is required for activation. Phosphorylated by the maturation promoting factor (MPF), composed of cdk1 and a cyclin-B. Also phosphorylated by some MAPK. Phosphorylated during oocyte maturation. Dephosphorylation destabilizes the protein. Post-translationally, degraded when cells exit mitosis.

Its subcellular location is the cell membrane. The catalysed reaction is L-seryl-[protein] + ATP = O-phospho-L-seryl-[protein] + ADP + H(+). It carries out the reaction L-threonyl-[protein] + ATP = O-phospho-L-threonyl-[protein] + ADP + H(+). Its activity is regulated as follows. Activated by autophosphorylation of the T-loop at Thr-169 and Ser-173: in contrast to other members of the SNF1 subfamily, phosphorylation at Thr-169 is not mediated by STK11/LKB1 but via autophosphorylation instead. Serine/threonine-protein kinase involved in various processes such as cell cycle regulation, self-renewal of stem cells, apoptosis and splicing regulation. Also plays a role in primitive hematopoiesis, possibly by affecting the expression of genes critical for hematopoiesis. Plays a role in cytokinesis during early development. This Xenopus tropicalis (Western clawed frog) protein is Maternal embryonic leucine zipper kinase (melk).